A 191-amino-acid polypeptide reads, in one-letter code: Guanylate kinase (191 aa).

In terms of domain architecture, Guanylate kinase-like spans 6–184; sequence GLIIILSSPS…TIQQIHTIIL (179 aa). 13–20 provides a ligand contact to ATP; the sequence is SPSGAGKS.

This sequence belongs to the guanylate kinase family.

It is found in the cytoplasm. It carries out the reaction GMP + ATP = GDP + ADP. In terms of biological role, essential for recycling GMP and indirectly, cGMP. The polypeptide is Guanylate kinase (Rickettsia bellii (strain RML369-C)).